Reading from the N-terminus, the 185-residue chain is Ribosome maturation factor RimM (185 aa).

In terms of domain architecture, PRC barrel spans 96-171; sequence EDEFYHSDLL…VITIDPPEDV (76 aa). The disordered stretch occupies residues 165–185; the sequence is IDPPEDVGSKAEEEGGGAPDD.

This sequence belongs to the RimM family. In terms of assembly, binds ribosomal protein uS19.

Its subcellular location is the cytoplasm. An accessory protein needed during the final step in the assembly of 30S ribosomal subunit, possibly for assembly of the head region. Essential for efficient processing of 16S rRNA. May be needed both before and after RbfA during the maturation of 16S rRNA. It has affinity for free ribosomal 30S subunits but not for 70S ribosomes. In Maricaulis maris (strain MCS10) (Caulobacter maris), this protein is Ribosome maturation factor RimM.